Here is a 113-residue protein sequence, read N- to C-terminus: Large ribosomal subunit protein eL31A (113 aa).

Belongs to the eukaryotic ribosomal protein eL31 family. As to quaternary structure, component of the large ribosomal subunit (LSU). Mature yeast ribosomes consist of a small (40S) and a large (60S) subunit. The 40S small subunit contains 1 molecule of ribosomal RNA (18S rRNA) and 33 different proteins (encoded by 57 genes). The large 60S subunit contains 3 rRNA molecules (25S, 5.8S and 5S rRNA) and 46 different proteins (encoded by 81 genes).

The protein resides in the cytoplasm. Functionally, component of the ribosome, a large ribonucleoprotein complex responsible for the synthesis of proteins in the cell. The small ribosomal subunit (SSU) binds messenger RNAs (mRNAs) and translates the encoded message by selecting cognate aminoacyl-transfer RNA (tRNA) molecules. The large subunit (LSU) contains the ribosomal catalytic site termed the peptidyl transferase center (PTC), which catalyzes the formation of peptide bonds, thereby polymerizing the amino acids delivered by tRNAs into a polypeptide chain. The nascent polypeptides leave the ribosome through a tunnel in the LSU and interact with protein factors that function in enzymatic processing, targeting, and the membrane insertion of nascent chains at the exit of the ribosomal tunnel. In Saccharomyces cerevisiae (strain ATCC 204508 / S288c) (Baker's yeast), this protein is Large ribosomal subunit protein eL31A.